A 663-amino-acid chain; its full sequence is Shugoshin 1 (663 aa).

Coiled-coil stretches lie at residues 8-29 and 110-132; these read KQAFQDSLEDIKERMKEKRIKK and DTAESKLASLKDIIAKVTHNLLE. Disordered stretches follow at residues 207 to 250, 278 to 401, and 417 to 478; these read RNTA…MNKN, EHTV…LNSG, and FRQN…ARKN. 4 stretches are compositionally biased toward basic and acidic residues: residues 231 to 242, 280 to 304, 339 to 358, and 366 to 394; these read RLEECNNEDKTE, TVVETERPFPTEEFSNESRTDREID, KNKEEPRVGRERVKKGKAER, and KPWENSKPRARSKSRDRSASKKSVAKEKM. Positions 427–437 are enriched in low complexity; it reads NESSLEISSSE. A compositionally biased stretch (basic and acidic residues) spans 443–453; that stretch reads SLYKPYKDKSK.

Belongs to the shugoshin family. In terms of assembly, binds microtubules. Ubiquitinated by the anaphase promoting complex (APC) at the onset of anaphase, conducting to its degradation.

It localises to the nucleus. It is found in the chromosome. The protein resides in the centromere. The protein localises to the kinetochore. Its subcellular location is the nucleus speckle. Its function is as follows. Plays a central role in chromosome cohesion during mitosis by preventing premature dissociation of cohesin complex from centromeres after prophase, when most of cohesin complex dissociates from chromosomes arms. May act by preventing phosphorylation of the stag2 subunit of cohesin complex at the centromere, ensuring cohesin persistence at centromere until cohesin cleavage by espl1/separase at anaphase. May regulate kinetochore microtubule stability in mitosis, possibly to sense tension on mitotic chromosomes. This chain is Shugoshin 1, found in Xenopus laevis (African clawed frog).